A 44-amino-acid chain; its full sequence is Thrombin-like enzyme F202 (44 aa).

The 44-residue stretch at 1–44 (VVGGDECNINEHRFLVALYANSSLLCGGTLINQEWVLIAAHCDR) folds into the Peptidase S1 domain. An intrachain disulfide couples Cys-26 to Cys-42. The Charge relay system role is filled by His-41.

The protein belongs to the peptidase S1 family. Snake venom subfamily. In terms of assembly, monomer. Post-translationally, contains 6 disulfide bonds. In terms of tissue distribution, expressed by the venom gland.

The protein resides in the secreted. Enzyme activity is markedly inhibited by TLCK and PMSF, and moderately by SBTi. Platelet aggregating activity is strongly inhibited by TLCK. In terms of biological role, thrombin-like snake venom serine protease that coagulates fibrinogen by inducing a fast degradation of the alpha chain (FGA) from human citrated plasma, and a slow degradation of beta chain (FGB). Potently induces platelet aggregation in both platelet rich plasma and washed platelet preparations in a concentration-dependent fashion. Shows amidolytic activities. The chain is Thrombin-like enzyme F202 from Crotalus durissus cascavella (Northeastern Brazilian rattlesnake).